The sequence spans 441 residues: 5-methylthioadenosine/S-adenosylhomocysteine deaminase (441 aa).

Residues histidine 70 and histidine 72 each contribute to the Zn(2+) site. Glutamate 99 and histidine 191 together coordinate substrate. Residue histidine 218 coordinates Zn(2+). Residues glutamate 221 and aspartate 306 each contribute to the substrate site. Aspartate 306 is a Zn(2+) binding site.

It belongs to the metallo-dependent hydrolases superfamily. MTA/SAH deaminase family. The cofactor is Zn(2+).

It carries out the reaction S-adenosyl-L-homocysteine + H2O + H(+) = S-inosyl-L-homocysteine + NH4(+). The enzyme catalyses S-methyl-5'-thioadenosine + H2O + H(+) = S-methyl-5'-thioinosine + NH4(+). Its function is as follows. Catalyzes the deamination of 5-methylthioadenosine and S-adenosyl-L-homocysteine into 5-methylthioinosine and S-inosyl-L-homocysteine, respectively. Is also able to deaminate adenosine. The protein is 5-methylthioadenosine/S-adenosylhomocysteine deaminase of Lawsonia intracellularis (strain PHE/MN1-00).